The following is a 241-amino-acid chain: Polyol phosphate phosphatase PYP1 (241 aa).

Aspartate 9 acts as the Nucleophile in catalysis. Aspartate 9, aspartate 11, and aspartate 179 together coordinate Mg(2+). Catalysis depends on aspartate 11, which acts as the Proton donor.

Belongs to the HAD-like hydrolase superfamily. Requires Mg(2+) as cofactor.

Its subcellular location is the cytoplasm. The protein localises to the nucleus. It catalyses the reaction D-ribitol 5-phosphate + H2O = ribitol + phosphate. The catalysed reaction is D-sorbitol 6-phosphate + H2O = D-sorbitol + phosphate. It carries out the reaction sn-glycerol 1-phosphate + H2O = glycerol + phosphate. The enzyme catalyses D-erythrose 4-phosphate + H2O = D-erythrose + phosphate. Its function is as follows. Hydrolyzes sugar alcohol (polyol) phosphates. Dephosphorylates a variety of substrates, including: sn-glycerol 1-phosphate (D-glycerol 3-phosphate), D-ribitol 5-phosphate, D-sorbitol 6-phosphate (D-glucitol 6-phosphate), and D-erythrose 4-phosphate. Prevents accumulation of toxic levels of polyol phosphates, which can impair glycolysis by inhibiting glucose-6-phosphate isomerase. This Saccharomyces cerevisiae (strain ATCC 204508 / S288c) (Baker's yeast) protein is Polyol phosphate phosphatase PYP1.